Reading from the N-terminus, the 607-residue chain is Frizzled and smoothened-like protein J (607 aa).

The N-terminal stretch at 1-26 (MVSNKNLLPIIYIFFIILYFGDVAKS) is a signal peptide. Residues 27–247 (QYFPLDKGAT…QWRNIYRLSD (221 aa)) lie on the Extracellular side of the membrane. Positions 32-182 (DKGATCQKYR…LSYTNTCENT (151 aa)) constitute an FZ domain. Disulfide bonds link C37-C108, C50-C101, and C127-C179. N-linked (GlcNAc...) asparagine glycosylation is found at N63, N133, N155, N164, N190, and N222. The helical transmembrane segment at 248 to 268 (VLSILSCILTLFLVITLGIIN) threads the bilayer. Over 269 to 276 (PKVSRFDK) the chain is Cytoplasmic. Residues 277 to 297 (INVMLLSSIFLQAFSGALMTF) form a helical membrane-spanning segment. N298 carries N-linked (GlcNAc...) asparagine glycosylation. The Extracellular segment spans residues 298 to 330 (NGTENTLCPEDGRFASYIDRMCVATGFLLHGSS). The helical transmembrane segment at 331–351 (LLVVQWWCVLSFEVWFTIFQV) threads the bilayer. Over 352–358 (GKKQKDR) the chain is Cytoplasmic. The chain crosses the membrane as a helical span at residues 359–379 (FIYYLVASLIIAWIPPIVSIS). Over 380-401 (KNEYSGGPANPFCWLTTFNYRR) the chain is Extracellular. Residues 402-422 (FAFWLPMGIFLCLGGVFLILL) form a helical membrane-spanning segment. Residues 423 to 451 (MREIYVIVSGNVQSTKESRFKVLKMEAKP) are Cytoplasmic-facing. The chain crosses the membrane as a helical span at residues 452–472 (IISLIMYFSCLLYLFIYDQWI). The Extracellular portion of the chain corresponds to 473-508 (NNHMHVYTDSIPSYALCLLTSTSTNDCLLKAPDITG). The helical transmembrane segment at 509–529 (LGYFIYSIRVFGVYAFIIYGI) threads the bilayer. At 530–607 (SKKTLQIWKY…VELDSNSDAL (78 aa)) the chain is on the cytoplasmic side. A Lys-Thr-X-X-X-Trp motif, mediates interaction with the PDZ domain of Dvl family members motif is present at residues 532-537 (KTLQIW). The span at 559 to 575 (TAKSSNSNNSSTTNNIS) shows a compositional bias: low complexity. The disordered stretch occupies residues 559–607 (TAKSSNSNNSSTTNNISVKASSNMEYETRQENENGDSQSVELDSNSDAL). Residues 593–607 (GDSQSVELDSNSDAL) are compositionally biased toward polar residues.

Belongs to the G-protein coupled receptor Fz/Smo family.

It is found in the membrane. This is Frizzled and smoothened-like protein J (fslJ-1) from Dictyostelium discoideum (Social amoeba).